The sequence spans 321 residues: Ribose-phosphate pyrophosphokinase (321 aa).

ATP-binding positions include 44 to 46 and 103 to 104; these read DGE and RQ. Mg(2+)-binding residues include H137 and D179. The active site involves K202. Residues R204, D228, and 232 to 236 contribute to the D-ribose 5-phosphate site; that span reads DTAGT.

Belongs to the ribose-phosphate pyrophosphokinase family. Class I subfamily. As to quaternary structure, homohexamer. Mg(2+) is required as a cofactor.

It is found in the cytoplasm. It carries out the reaction D-ribose 5-phosphate + ATP = 5-phospho-alpha-D-ribose 1-diphosphate + AMP + H(+). It functions in the pathway metabolic intermediate biosynthesis; 5-phospho-alpha-D-ribose 1-diphosphate biosynthesis; 5-phospho-alpha-D-ribose 1-diphosphate from D-ribose 5-phosphate (route I): step 1/1. Involved in the biosynthesis of the central metabolite phospho-alpha-D-ribosyl-1-pyrophosphate (PRPP) via the transfer of pyrophosphoryl group from ATP to 1-hydroxyl of ribose-5-phosphate (Rib-5-P). The protein is Ribose-phosphate pyrophosphokinase of Staphylococcus epidermidis (strain ATCC 35984 / DSM 28319 / BCRC 17069 / CCUG 31568 / BM 3577 / RP62A).